Reading from the N-terminus, the 414-residue chain is Peptide chain release factor subunit 1 (414 aa).

The protein belongs to the eukaryotic release factor 1 family. In terms of assembly, heterodimer of two subunits, one of which binds GTP.

The protein localises to the cytoplasm. Functionally, directs the termination of nascent peptide synthesis (translation) in response to the termination codons UAA, UAG and UGA. The chain is Peptide chain release factor subunit 1 from Methanococcoides burtonii (strain DSM 6242 / NBRC 107633 / OCM 468 / ACE-M).